A 479-amino-acid polypeptide reads, in one-letter code: Glutamyl-tRNA reductase (479 aa).

Residues 48-51 (TCNR), serine 104, 109-111 (ERQ), and glutamine 115 each bind substrate. The active-site Nucleophile is cysteine 49. Residue 189 to 194 (GAGKMG) participates in NADP(+) binding. Residues 417–455 (DAGRSLAEAPDADTPDLGEAPSRCPYMTHDPGGDGTETE) are disordered.

The protein belongs to the glutamyl-tRNA reductase family. In terms of assembly, homodimer.

The catalysed reaction is (S)-4-amino-5-oxopentanoate + tRNA(Glu) + NADP(+) = L-glutamyl-tRNA(Glu) + NADPH + H(+). Its pathway is porphyrin-containing compound metabolism; protoporphyrin-IX biosynthesis; 5-aminolevulinate from L-glutamyl-tRNA(Glu): step 1/2. In terms of biological role, catalyzes the NADPH-dependent reduction of glutamyl-tRNA(Glu) to glutamate 1-semialdehyde (GSA). The polypeptide is Glutamyl-tRNA reductase (Salinibacter ruber (strain DSM 13855 / M31)).